A 458-amino-acid chain; its full sequence is NADH-ubiquinone oxidoreductase chain 4 (458 aa).

13 consecutive transmembrane segments (helical) span residues 22–42 (FFWT…FIFT), 63–83 (MISA…ALAS), 96–116 (LLYI…FLST), 117–137 (NLMN…LIIF), 150–170 (IYLS…LLFL), 194–214 (ILWL…GFHL), 224–244 (TIAG…YGMI), 257–277 (LSLI…FICL), 284–306 (ALIA…TLSL), 311–333 (GAFI…ANSN), 350–370 (MLLP…LAMP), 391–413 (LTFP…MFML), and 434–454 (LTLF…NMII).

This sequence belongs to the complex I subunit 4 family.

It is found in the mitochondrion membrane. It carries out the reaction a ubiquinone + NADH + 5 H(+)(in) = a ubiquinol + NAD(+) + 4 H(+)(out). Its function is as follows. Core subunit of the mitochondrial membrane respiratory chain NADH dehydrogenase (Complex I) that is believed to belong to the minimal assembly required for catalysis. Complex I functions in the transfer of electrons from NADH to the respiratory chain. The immediate electron acceptor for the enzyme is believed to be ubiquinone. This is NADH-ubiquinone oxidoreductase chain 4 (MT-ND4) from Myxine glutinosa (Atlantic hagfish).